A 307-amino-acid polypeptide reads, in one-letter code: tRNA dimethylallyltransferase 1 (307 aa).

An ATP-binding site is contributed by 11–18; it reads GPTASGKT. 13–18 is a binding site for substrate; that stretch reads TASGKT. Interaction with substrate tRNA stretches follow at residues 36 to 39 and 159 to 163; these read DSRQ and QRAIR.

This sequence belongs to the IPP transferase family. As to quaternary structure, monomer. Mg(2+) serves as cofactor.

The catalysed reaction is adenosine(37) in tRNA + dimethylallyl diphosphate = N(6)-dimethylallyladenosine(37) in tRNA + diphosphate. Its function is as follows. Catalyzes the transfer of a dimethylallyl group onto the adenine at position 37 in tRNAs that read codons beginning with uridine, leading to the formation of N6-(dimethylallyl)adenosine (i(6)A). This Parabacteroides distasonis (strain ATCC 8503 / DSM 20701 / CIP 104284 / JCM 5825 / NCTC 11152) protein is tRNA dimethylallyltransferase 1.